A 130-amino-acid polypeptide reads, in one-letter code: Small ribosomal subunit protein uS8 (130 aa).

Belongs to the universal ribosomal protein uS8 family. Part of the 30S ribosomal subunit. Contacts proteins S5 and S12.

One of the primary rRNA binding proteins, it binds directly to 16S rRNA central domain where it helps coordinate assembly of the platform of the 30S subunit. In Cellvibrio japonicus (strain Ueda107) (Pseudomonas fluorescens subsp. cellulosa), this protein is Small ribosomal subunit protein uS8.